The primary structure comprises 240 residues: Ribonuclease PH (240 aa).

Residues R87 and G125–R127 each bind phosphate.

It belongs to the RNase PH family. As to quaternary structure, homohexameric ring arranged as a trimer of dimers.

It catalyses the reaction tRNA(n+1) + phosphate = tRNA(n) + a ribonucleoside 5'-diphosphate. Its function is as follows. Phosphorolytic 3'-5' exoribonuclease that plays an important role in tRNA 3'-end maturation. Removes nucleotide residues following the 3'-CCA terminus of tRNAs; can also add nucleotides to the ends of RNA molecules by using nucleoside diphosphates as substrates, but this may not be physiologically important. Probably plays a role in initiation of 16S rRNA degradation (leading to ribosome degradation) during starvation. The sequence is that of Ribonuclease PH from Pseudomonas putida (strain ATCC 47054 / DSM 6125 / CFBP 8728 / NCIMB 11950 / KT2440).